We begin with the raw amino-acid sequence, 233 residues long: LOB domain-containing protein 40 (233 aa).

The LOB domain maps to 3–109 (MSCNGCRVLR…VEAVMRGSPV (107 aa)). Residues 143–160 (KRRSRGACKEERNVRSLS) show a composition bias toward basic and acidic residues. A disordered region spans residues 143 to 183 (KRRSRGACKEERNVRSLSHESSLSHESPVSSEETTTEEPKT). The span at 161–175 (HESSLSHESPVSSEE) shows a compositional bias: low complexity.

This sequence belongs to the LOB domain-containing protein family. As to expression, expressed in roots and flowers.

This Arabidopsis thaliana (Mouse-ear cress) protein is LOB domain-containing protein 40 (LBD40).